The following is a 1010-amino-acid chain: Peroxisome proliferator-activated receptor gamma coactivator 1-beta (1010 aa).

The interval 1 to 91 (MAGNDCGALL…FFQIDSENEA (91 aa)) is abolishes DNA transcriptional activity when missing. The segment at 115–134 (GLDEGDTPSCTPASPAPLSV) is disordered. Residues 140-144 (LERLL) carry the LXXLL motif 1 motif. 2 positions are modified to phosphoserine: serine 145 and serine 148. The LXXLL motif 2 motif lies at 156–160 (LQKLL). Disordered regions lie at residues 165-214 (SPTA…RPCT), 227-282 (PRGK…QVPK), and 306-329 (PQRA…PRSR). 2 stretches are compositionally biased toward polar residues: residues 178 to 189 (TWSQTSLSSRSQ) and 264 to 279 (PQDS…NSAQ). An LXXLL motif 3 motif is present at residues 342–346 (LRELL). The span at 369 to 384 (TPQSRTRPPKDSQASP) shows a compositional bias: polar residues. Disordered stretches follow at residues 369–475 (TPQS…VCPV), 517–567 (GLTD…CLML), and 590–674 (GTAG…QKRP). The residue at position 383 (serine 383) is a Phosphoserine. The segment covering 411–428 (LRLEVKRDVNKPARQKRE) has biased composition (basic and acidic residues). A compositionally biased stretch (acidic residues) spans 429–449 (EDEEEEEEEEEEEEKEDEEEE). Residues 521–532 (SSQGQQLPLGSQ) show a composition bias toward low complexity. The segment covering 604-618 (PMEEDPFKQDTKHSP) has biased composition (basic and acidic residues). Composition is skewed to polar residues over residues 619 to 638 (GQDT…TATP) and 659 to 670 (QHATTQPVSQAG). A Phosphoserine modification is found at serine 628. The short motif at 681–684 (DHDY) is the HCFC1-binding-motif (HBM) element. Disordered stretches follow at residues 714 to 744 (HQGA…SMQL) and 778 to 881 (DTVF…KKRR). Positions 782–794 (EDSSSSSGESSFL) are enriched in low complexity. A compositionally biased stretch (acidic residues) spans 795–811 (LEEEEEEGGEEDDEGED). Residues 832 to 852 (SRQLCSRSRSSSGSSSCSSWS) are compositionally biased toward low complexity. Residues 889–963 (RVVYIRNLSG…RNEPSFHLSY (75 aa)) form the RRM domain.

As to quaternary structure, interacts with estrogen receptor alpha/ESR1. Interacts with Sterol regulatory binding transcription factor 1/SREBF1, PPAR-alpha/PPARA, thyroid hormone receptor beta/THRB and host cell factor/HCFC1. Interacts with Estrogen-related receptor gamma/ESRRG and alpha/ESRRA. Interacts with PRDM16. Ubiquitous with higher expression in heart, brown adipose tissue.

The protein resides in the nucleus. Its function is as follows. Plays a role of stimulator of transcription factors and nuclear receptors activities. Activates transcriptional activity of estrogen receptor alpha, nuclear respiratory factor 1 (NRF1) and glucocorticoid receptor in the presence of glucocorticoids. May play a role in constitutive non-adrenergic-mediated mitochondrial biogenesis as suggested by increased basal oxygen consumption and mitochondrial number when overexpressed. May be part of the pathways regulating the elevation of gluconeogenesis, beta-oxidation of fatty acids and ketogenesis during fasting. Stimulates SREBP-mediated lipogenic gene expression in the liver. Induces energy expenditure and antagonizes obesity when overexpressed. Also induces the expression of mitochondrial genes involved in oxidative metabolism. Induces the expression of PERM1 in the skeletal muscle in an ESRRA-dependent manner. The chain is Peroxisome proliferator-activated receptor gamma coactivator 1-beta (Ppargc1b) from Rattus norvegicus (Rat).